Reading from the N-terminus, the 300-residue chain is Epimerase family protein SAV0769 (300 aa).

The protein belongs to the NAD(P)-dependent epimerase/dehydratase family. SDR39U1 subfamily.

The protein is Epimerase family protein SAV0769 of Staphylococcus aureus (strain Mu50 / ATCC 700699).